Reading from the N-terminus, the 412-residue chain is Transcription factor NIGT1 (412 aa).

Disordered stretches follow at residues 54–241, 286–310, and 358–412; these read MDAA…RCWA, KYRL…PAPP, and AMLP…TTSA. A compositionally biased stretch (basic and acidic residues) spans 90–112; that stretch reads ESTHADAAKSGKKEEAETSERHS. The segment covering 183-193 has biased composition (low complexity); it reads ASSTTAAASST. The segment covering 198 to 228 has biased composition (basic and acidic residues); that stretch reads SGDKPTDDDTEKHMETDKDNDKDAKDKDKEG. Positions 232 to 292 constitute an HTH myb-type domain; sequence PHRKPRRCWA…HLQKYRLHTR (61 aa). The segment at residues 263–288 is a DNA-binding region (H-T-H motif); the sequence is PKQIRELMKVDGLTNDEVKSHLQKYR. A compositionally biased stretch (basic and acidic residues) spans 383-392; it reads SGSEGRRSGD. Residues 395-412 are compositionally biased toward low complexity; sequence DGSSSSPAVSSSSQTTSA.

The protein localises to the nucleus. Transcriptional repressor that may play a role in response to nitrogen. May be involved in a time-dependent signaling for transcriptional regulation of nitrate-responsive genes. Binds specifically to the DNA sequence motif 5'-GAATC-3' or 5'-GAATATTC-3'. Represses the activity of its own promoter trough binding to these motifs. This Oryza sativa subsp. japonica (Rice) protein is Transcription factor NIGT1.